A 416-amino-acid polypeptide reads, in one-letter code: Serine hydroxymethyltransferase (416 aa).

(6S)-5,6,7,8-tetrahydrofolate-binding positions include L121 and 125-127 (GHL). K230 is modified (N6-(pyridoxal phosphate)lysine).

Belongs to the SHMT family. In terms of assembly, homodimer. Requires pyridoxal 5'-phosphate as cofactor.

The protein resides in the cytoplasm. It carries out the reaction (6R)-5,10-methylene-5,6,7,8-tetrahydrofolate + glycine + H2O = (6S)-5,6,7,8-tetrahydrofolate + L-serine. It participates in one-carbon metabolism; tetrahydrofolate interconversion. The protein operates within amino-acid biosynthesis; glycine biosynthesis; glycine from L-serine: step 1/1. Catalyzes the reversible interconversion of serine and glycine with tetrahydrofolate (THF) serving as the one-carbon carrier. This reaction serves as the major source of one-carbon groups required for the biosynthesis of purines, thymidylate, methionine, and other important biomolecules. Also exhibits THF-independent aldolase activity toward beta-hydroxyamino acids, producing glycine and aldehydes, via a retro-aldol mechanism. This Nitrosomonas europaea (strain ATCC 19718 / CIP 103999 / KCTC 2705 / NBRC 14298) protein is Serine hydroxymethyltransferase.